The sequence spans 743 residues: Catalase-peroxidase (743 aa).

The interval 1-22 (MEKQSNDAAVAGAPNDHGAAKC) is disordered. The tryptophyl-tyrosyl-methioninium (Trp-Tyr) (with M-253) cross-link spans 105-227 (WHSAGTYRIT…LGAVQMGLIY (123 aa)). The Proton acceptor role is filled by His-106. Residues 227–253 (YVNPEGPNGNPDPVAAAKDIRETFFRM) constitute a cross-link (tryptophyl-tyrosyl-methioninium (Tyr-Met) (with W-105)). His-268 contacts heme b.

Belongs to the peroxidase family. Peroxidase/catalase subfamily. In terms of assembly, homodimer or homotetramer. It depends on heme b as a cofactor. Formation of the three residue Trp-Tyr-Met cross-link is important for the catalase, but not the peroxidase activity of the enzyme.

The catalysed reaction is H2O2 + AH2 = A + 2 H2O. It carries out the reaction 2 H2O2 = O2 + 2 H2O. Bifunctional enzyme with both catalase and broad-spectrum peroxidase activity. The chain is Catalase-peroxidase from Solibacter usitatus (strain Ellin6076).